A 235-amino-acid polypeptide reads, in one-letter code: Ribitol-5-phosphate cytidylyltransferase (235 aa).

CTP is bound by residues 7–10, 82–88, and Ser113; these read LAGG and GADRNTS.

Belongs to the IspD/TarI cytidylyltransferase family. TarI subfamily.

The catalysed reaction is D-ribitol 5-phosphate + CTP + H(+) = CDP-L-ribitol + diphosphate. It participates in cell wall biogenesis; poly(ribitol phosphate) teichoic acid biosynthesis. In terms of biological role, catalyzes the transfer of the cytidylyl group of CTP to D-ribitol 5-phosphate. This chain is Ribitol-5-phosphate cytidylyltransferase, found in Streptococcus pneumoniae serotype 19F (strain G54).